The following is a 671-amino-acid chain: Pescadillo homolog (671 aa).

Coiled-coil stretches lie at residues 294–323 (NQAQ…ELFR) and 548–584 (QALR…TRKM). Positions 317–403 (KVRELFRGLT…LVLPVTGYRI (87 aa)) constitute a BRCT domain. Disordered stretches follow at residues 552–577 (KAQE…VKRQ) and 634–671 (GLVN…KWVQ). The span at 634 to 651 (GLVNKRLEARRQRAEAKG) shows a compositional bias: basic and acidic residues.

Belongs to the pescadillo family.

It localises to the nucleus. The protein localises to the nucleolus. It is found in the nucleoplasm. Required for maturation of ribosomal RNAs and formation of the large ribosomal subunit. The polypeptide is Pescadillo homolog (Leishmania major).